Consider the following 252-residue polypeptide: Imidazole glycerol phosphate synthase subunit HisF (252 aa).

Residues Asp-11 and Asp-130 contribute to the active site.

This sequence belongs to the HisA/HisF family. Heterodimer of HisH and HisF.

Its subcellular location is the cytoplasm. The enzyme catalyses 5-[(5-phospho-1-deoxy-D-ribulos-1-ylimino)methylamino]-1-(5-phospho-beta-D-ribosyl)imidazole-4-carboxamide + L-glutamine = D-erythro-1-(imidazol-4-yl)glycerol 3-phosphate + 5-amino-1-(5-phospho-beta-D-ribosyl)imidazole-4-carboxamide + L-glutamate + H(+). It participates in amino-acid biosynthesis; L-histidine biosynthesis; L-histidine from 5-phospho-alpha-D-ribose 1-diphosphate: step 5/9. IGPS catalyzes the conversion of PRFAR and glutamine to IGP, AICAR and glutamate. The HisF subunit catalyzes the cyclization activity that produces IGP and AICAR from PRFAR using the ammonia provided by the HisH subunit. In Bacillus cytotoxicus (strain DSM 22905 / CIP 110041 / 391-98 / NVH 391-98), this protein is Imidazole glycerol phosphate synthase subunit HisF.